The primary structure comprises 372 residues: tRNA-specific 2-thiouridylase MnmA (372 aa).

ATP-binding positions include 16 to 23 (GMSGGVDS) and Met42. Residues 102-104 (NPD) are interaction with target base in tRNA. Residue Cys107 is the Nucleophile of the active site. Cys107 and Cys205 are joined by a disulfide. Residue Gly132 coordinates ATP. Residues 155–157 (KDQ) form an interaction with tRNA region. Cys205 acts as the Cysteine persulfide intermediate in catalysis. The interaction with tRNA stretch occupies residues 317–318 (RY).

It belongs to the MnmA/TRMU family.

Its subcellular location is the cytoplasm. It carries out the reaction S-sulfanyl-L-cysteinyl-[protein] + uridine(34) in tRNA + AH2 + ATP = 2-thiouridine(34) in tRNA + L-cysteinyl-[protein] + A + AMP + diphosphate + H(+). Its function is as follows. Catalyzes the 2-thiolation of uridine at the wobble position (U34) of tRNA, leading to the formation of s(2)U34. The sequence is that of tRNA-specific 2-thiouridylase MnmA from Shewanella sp. (strain MR-4).